A 575-amino-acid polypeptide reads, in one-letter code: Sialate:O-sulfotransferase 1 (575 aa).

The Cytoplasmic portion of the chain corresponds to Met-1–Arg-14. The helical; Signal-anchor for type II membrane protein transmembrane segment at Thr-15–Leu-35 threads the bilayer. Topologically, residues Gln-36–Arg-575 are extracellular. 2 consecutive WSC domains span residues Arg-142–Asp-234 and Thr-245–Cys-340. Residues Asn-257 and Asn-348 are each glycosylated (N-linked (GlcNAc...) asparagine).

This sequence belongs to the WSCD family.

The protein resides in the golgi apparatus membrane. The catalysed reaction is a ganglioside GM1b + 3'-phosphoadenylyl sulfate = an 8-O-sulfo-ganglioside GM1b + adenosine 3',5'-bisphosphate + H(+). In terms of biological role, sialate:O-sulfotransferase which catalyzes 8-O-sulfation at the Sia-glycan level using 3'-phosphoadenosine 5'-phosphosulfate (PAPS) as a donor, forming 8-O-sulfated Sia (Sia8S)-glycans. Displays selectivity toward glycolipids such as GM1 gangliosides. The polypeptide is Sialate:O-sulfotransferase 1 (WSCD1) (Homo sapiens (Human)).